Here is a 104-residue protein sequence, read N- to C-terminus: L-rhamnose mutarotase (104 aa).

Position 18 (Tyr18) interacts with substrate. His22 serves as the catalytic Proton donor. Residues Tyr41 and 76–77 (WW) each bind substrate.

Belongs to the rhamnose mutarotase family. Homodimer.

It is found in the cytoplasm. The catalysed reaction is alpha-L-rhamnose = beta-L-rhamnose. The protein operates within carbohydrate metabolism; L-rhamnose metabolism. In terms of biological role, involved in the anomeric conversion of L-rhamnose. The chain is L-rhamnose mutarotase from Escherichia coli (strain K12 / MC4100 / BW2952).